A 355-amino-acid polypeptide reads, in one-letter code: Replication-associated protein (355 aa).

In terms of domain architecture, CRESS-DNA virus Rep endonuclease spans 11-114; it reads LHRTANTFLT…PLALFERGTF (104 aa). The short motif at 18 to 21 is the RCR-1 element; that stretch reads FLTY. Residues Glu-52, His-60, and His-62 each contribute to the a divalent metal cation site. The RCR-2 signature appears at 60-62; the sequence is HLH. The active-site For DNA cleavage activity is the Tyr-100. Positions 100 to 103 match the RCR-3 motif; the sequence is YILK. Glu-104 serves as a coordination point for a divalent metal cation. The tract at residues 175–187 is oligomerization; it reads SANKLFPDIQEEF. An ATP-binding site is contributed by 229 to 236; it reads GPTRTGKS. The segment at 252–270 is transactivation; that stretch reads VDWSSYNEDAIYNIVDDIP. A Nuclear localization signal motif is present at residues 292-303; the sequence is KYGKKKKVQMKS.

It belongs to the geminiviridae Rep protein family. In terms of assembly, homooligomer. Rep binds to repeated DNA motifs (iterons). Forms the O-complex, which is a Rep-DNA complex involved in the initiation of RCR. Part of the C- and V-complexes which are RepA-Rep-DNA complexes involved in the c-sense and v-sense transcription. The cofactor is Mg(2+). It depends on Mn(2+) as a cofactor.

The protein resides in the host nucleus. Functionally, essential for the replication of viral ssDNA. The closed circular ssDNA genome is first converted to a superhelical dsDNA. Rep binds a specific region at the genome origin of replication. It introduces an endonucleolytic nick within the conserved sequence 5'-TAATATTAC-3' in the intergenic region of the genome present in all geminiviruses, thereby initiating the rolling circle replication (RCR). Following cleavage, binds covalently to the 5'-phosphate of DNA as a tyrosyl ester. The cleavage gives rise to a free 3'-OH that serves as a primer for the cellular DNA polymerase. The polymerase synthesizes the (+) strand DNA by rolling circle mechanism. After one round of replication, a Rep-catalyzed nucleotidyl transfer reaction releases a circular single-stranded virus genome, thereby terminating the replication. Displays origin-specific DNA cleavage, nucleotidyl transferase, ATPase and helicase activities. Acts as an inhibitor of C-sense gene transcription. The polypeptide is Replication-associated protein (Maize streak virus genotype D (isolate Raw) (MSV)).